A 149-amino-acid polypeptide reads, in one-letter code: Nucleoside diphosphate kinase (149 aa).

6 residues coordinate ATP: Lys-9, Phe-57, Arg-85, Thr-91, Arg-102, and Asn-112. The active-site Pros-phosphohistidine intermediate is the His-115.

This sequence belongs to the NDK family. Requires Mg(2+) as cofactor.

It is found in the cytoplasm. The catalysed reaction is a 2'-deoxyribonucleoside 5'-diphosphate + ATP = a 2'-deoxyribonucleoside 5'-triphosphate + ADP. It catalyses the reaction a ribonucleoside 5'-diphosphate + ATP = a ribonucleoside 5'-triphosphate + ADP. Major role in the synthesis of nucleoside triphosphates other than ATP. The ATP gamma phosphate is transferred to the NDP beta phosphate via a ping-pong mechanism, using a phosphorylated active-site intermediate. The sequence is that of Nucleoside diphosphate kinase from Methanocorpusculum labreanum (strain ATCC 43576 / DSM 4855 / Z).